The following is a 688-amino-acid chain: Glycine--tRNA ligase beta subunit (688 aa).

The protein belongs to the class-II aminoacyl-tRNA synthetase family. As to quaternary structure, tetramer of two alpha and two beta subunits.

It localises to the cytoplasm. The catalysed reaction is tRNA(Gly) + glycine + ATP = glycyl-tRNA(Gly) + AMP + diphosphate. In Geotalea uraniireducens (strain Rf4) (Geobacter uraniireducens), this protein is Glycine--tRNA ligase beta subunit.